We begin with the raw amino-acid sequence, 316 residues long: Arginine transport system permease protein ArgU (316 aa).

Positions 1–14 are enriched in polar residues; that stretch reads MSDLNQGPGASTAQ. The segment at 1-20 is disordered; the sequence is MSDLNQGPGASTAQPKPIEA. 6 consecutive transmembrane segments (helical) span residues 29–49, 74–94, 108–128, 151–171, 217–237, and 251–271; these read WVAA…ALNN, IALT…LAVM, LYLW…WGLL, MFLL…AEIV, LISM…LELY, and VPML…LMVG. The 205-residue stretch at 70-274 folds into the ABC transmembrane type-1 domain; the sequence is ALHTIALTLL…TSILMVGQYY (205 aa).

Belongs to the binding-protein-dependent transport system permease family. As to quaternary structure, the complex is probably composed of two ATP-binding proteins (ArgV), two transmembrane proteins (ArgU) and a solute-binding protein (ArgT).

The protein localises to the cell membrane. In terms of biological role, part of the ABC transporter complex ArgTUV involved in L-arginine import. May also transport L-citrulline. Probably responsible for the translocation of the substrate across the membrane. This chain is Arginine transport system permease protein ArgU, found in Corynebacterium glutamicum (strain ATCC 13032 / DSM 20300 / JCM 1318 / BCRC 11384 / CCUG 27702 / LMG 3730 / NBRC 12168 / NCIMB 10025 / NRRL B-2784 / 534).